The chain runs to 752 residues: Photosystem I P700 chlorophyll a apoprotein A1 (752 aa).

The next 8 membrane-spanning stretches (helical) occupy residues 73 to 96 (IFSAHFGHLAVVMVWLSGMIFHGA), 159 to 182 (LYVTAIGGLVLAGLFLFAGWFHYH), 198 to 222 (LNHHLQVLLGCGSLGWAGHLIHVSA), 294 to 312 (IAHHHLAIAVLFIVAGHQY), 349 to 372 (WHAQLATNLAFLGSLTIIIAHHMY), 388 to 414 (LCIFTHHIWIGGFLIVGGAAHAAIFMV), 436 to 458 (AIISHLNWVCIFLGFHSFGLYIH), and 533 to 551 (FLIHHIHAFTIHVTVLILL). Cys575 and Cys584 together coordinate [4Fe-4S] cluster. Transmembrane regions (helical) follow at residues 591-612 (HVFLGLFWMYNSLSIVIFHFSW) and 666-688 (LSAYGLLFLGAHFVWAFSLMFLF). Residue His677 coordinates chlorophyll a'. Chlorophyll a contacts are provided by Met685 and Tyr693. Trp694 is a binding site for phylloquinone. A helical membrane pass occupies residues 726-746 (AVGVAHYLLGGIATTWAFFHA).

The protein belongs to the PsaA/PsaB family. The PsaA/B heterodimer binds the P700 chlorophyll special pair and subsequent electron acceptors. PSI consists of a core antenna complex that captures photons, and an electron transfer chain that converts photonic excitation into a charge separation. The cyanobacterial PSI reaction center is composed of one copy each of PsaA,B,C,D,E,F,I,J,K,L,M and X, and forms trimeric complexes. PSI electron transfer chain: 5 chlorophyll a, 1 chlorophyll a', 2 phylloquinones and 3 4Fe-4S clusters. PSI core antenna: 90 chlorophyll a, 22 carotenoids, 3 phospholipids and 1 galactolipid. P700 is a chlorophyll a/chlorophyll a' dimer, A0 is one or more chlorophyll a, A1 is one or both phylloquinones and FX is a shared 4Fe-4S iron-sulfur center. is required as a cofactor.

It localises to the cellular thylakoid membrane. The enzyme catalyses reduced [plastocyanin] + hnu + oxidized [2Fe-2S]-[ferredoxin] = oxidized [plastocyanin] + reduced [2Fe-2S]-[ferredoxin]. Functionally, psaA and PsaB bind P700, the primary electron donor of photosystem I (PSI), as well as the electron acceptors A0, A1 and FX. PSI is a plastocyanin/cytochrome c6-ferredoxin oxidoreductase, converting photonic excitation into a charge separation, which transfers an electron from the donor P700 chlorophyll pair to the spectroscopically characterized acceptors A0, A1, FX, FA and FB in turn. Oxidized P700 is reduced on the lumenal side of the thylakoid membrane by plastocyanin or cytochrome c6. The protein is Photosystem I P700 chlorophyll a apoprotein A1 of Nostoc punctiforme (strain ATCC 29133 / PCC 73102).